The chain runs to 248 residues: 3-deoxy-manno-octulosonate cytidylyltransferase (248 aa).

This sequence belongs to the KdsB family.

It localises to the cytoplasm. The enzyme catalyses 3-deoxy-alpha-D-manno-oct-2-ulosonate + CTP = CMP-3-deoxy-beta-D-manno-octulosonate + diphosphate. It participates in nucleotide-sugar biosynthesis; CMP-3-deoxy-D-manno-octulosonate biosynthesis; CMP-3-deoxy-D-manno-octulosonate from 3-deoxy-D-manno-octulosonate and CTP: step 1/1. It functions in the pathway bacterial outer membrane biogenesis; lipopolysaccharide biosynthesis. Its function is as follows. Activates KDO (a required 8-carbon sugar) for incorporation into bacterial lipopolysaccharide in Gram-negative bacteria. This Syntrophus aciditrophicus (strain SB) protein is 3-deoxy-manno-octulosonate cytidylyltransferase.